We begin with the raw amino-acid sequence, 363 residues long: NADH-quinone oxidoreductase subunit H (363 aa).

9 consecutive transmembrane segments (helical) span residues 62 to 82 (GPMY…KLLF), 94 to 114 (AIFV…WAVV), 127 to 147 (VGLL…ILAG), 166 to 186 (VVSY…AAGS), 202 to 222 (FFDW…VSGV), 239 to 257 (IVAG…LFFL), 264 to 286 (ILVS…QGWV), 293 to 313 (LIDW…LFFA), and 339 to 359 (FIPL…SGVI).

The protein belongs to the complex I subunit 1 family. NDH-1 is composed of 14 different subunits. Subunits NuoA, H, J, K, L, M, N constitute the membrane sector of the complex.

The protein localises to the cell inner membrane. The catalysed reaction is a quinone + NADH + 5 H(+)(in) = a quinol + NAD(+) + 4 H(+)(out). Functionally, NDH-1 shuttles electrons from NADH, via FMN and iron-sulfur (Fe-S) centers, to quinones in the respiratory chain. The immediate electron acceptor for the enzyme in this species is believed to be ubiquinone. Couples the redox reaction to proton translocation (for every two electrons transferred, four hydrogen ions are translocated across the cytoplasmic membrane), and thus conserves the redox energy in a proton gradient. This subunit may bind ubiquinone. This chain is NADH-quinone oxidoreductase subunit H, found in Xylella fastidiosa (strain 9a5c).